Reading from the N-terminus, the 341-residue chain is HTH-type transcriptional repressor PurR (341 aa).

Residues 2–56 (ATIKDVAKRANVSTTTVSHVINKTRFVAEETRNAVWAAIKELHYSPSAVARSLKV) form the HTH lacI-type domain. The segment at residues 4–23 (IKDVAKRANVSTTTVSHVIN) is a DNA-binding region (H-T-H motif). A DNA-binding region spans residues 48–56 (SAVARSLKV). Residues Tyr-73, Arg-190, Thr-192, Phe-221, and Asp-275 each coordinate hypoxanthine.

In terms of assembly, homodimer.

It participates in purine metabolism; purine nucleotide biosynthesis [regulation]. Its function is as follows. Is the main repressor of the genes involved in the de novo synthesis of purine nucleotides, regulating purB, purC, purEK, purF, purHD, purL, purMN and guaBA expression. PurR is allosterically activated to bind its cognate DNA by binding the purine corepressors, hypoxanthine or guanine, thereby effecting transcription repression. This chain is HTH-type transcriptional repressor PurR, found in Shigella dysenteriae serotype 1 (strain Sd197).